We begin with the raw amino-acid sequence, 346 residues long: MDDNKAKALAAALSQIEKQFGKGSIMRMGDGTIERDIQTVSTGSLGLDIALGLGGLPRGRVVEIYGPESSGKTTLTLQVIAEMQKLGGTAAFIDAEHALDVGYAEKLGVNIQDLLISQPDTGEQALEIADMLVRSGGVEIVVIDSVAALTPKAEIEGEMGDQLPGLQARLMSQALRKLTANIKRTNTLVIFINQIRMKIGVMFGSPETTTGGNALKFYASVRLDIRRTGAIKKGDEVVGSETRCKVVKNKVAPPFKEAHFDILYGEGISREGEIIDLGVQHKIVDKSGAWYAYKGEKIGQGKDNSREFLRANPALAREIENKVRAQVGLNAMAVEAAPAGVAPVEP.

Gly-66 to Thr-73 contacts ATP.

This sequence belongs to the RecA family.

The protein resides in the cytoplasm. In terms of biological role, can catalyze the hydrolysis of ATP in the presence of single-stranded DNA, the ATP-dependent uptake of single-stranded DNA by duplex DNA, and the ATP-dependent hybridization of homologous single-stranded DNAs. It interacts with LexA causing its activation and leading to its autocatalytic cleavage. This Aromatoleum aromaticum (strain DSM 19018 / LMG 30748 / EbN1) (Azoarcus sp. (strain EbN1)) protein is Protein RecA.